We begin with the raw amino-acid sequence, 458 residues long: Glycine--tRNA ligase (458 aa).

Residues arginine 97 and glutamate 171 each coordinate substrate. ATP is bound by residues 203–205 (RNE), 213–218 (FRTREF), 287–288 (EL), and 331–334 (GADR). 218–222 (FEQME) is a binding site for substrate. Position 327–331 (327–331 (EPSLG)) interacts with substrate.

It belongs to the class-II aminoacyl-tRNA synthetase family. As to quaternary structure, homodimer.

The protein resides in the cytoplasm. It catalyses the reaction tRNA(Gly) + glycine + ATP = glycyl-tRNA(Gly) + AMP + diphosphate. Functionally, catalyzes the attachment of glycine to tRNA(Gly). This is Glycine--tRNA ligase from Bacillus thuringiensis subsp. konkukian (strain 97-27).